Reading from the N-terminus, the 462-residue chain is Metacaspase-1 (462 aa).

The segment covering 1–21 (MSYYPPPSGYPGGPPAYPPPQ) has biased composition (pro residues). Residues 1-150 (MSYYPPPSGY…PPPPSGSVAF (150 aa)) are disordered. A compositionally biased stretch (low complexity) spans 22–33 (QQQQQQQQYPSY). Pro residues-rich tracts occupy residues 49–69 (PSYP…PPHS) and 77–102 (SPQP…PPSP). Residues His-253 and Cys-309 contribute to the active site.

The protein belongs to the peptidase C14B family.

Involved in cell death (apoptosis). The polypeptide is Metacaspase-1 (MCA1) (Coccidioides immitis (strain RS) (Valley fever fungus)).